The sequence spans 228 residues: 2,3-bisphosphoglycerate-dependent phosphoglycerate mutase (228 aa).

Substrate contacts are provided by residues R8–N15, T21–G22, R60, E87–Y90, K98, R114–R115, and G183–N184. The active-site Tele-phosphohistidine intermediate is H9. Catalysis depends on E87, which acts as the Proton donor/acceptor.

Belongs to the phosphoglycerate mutase family. BPG-dependent PGAM subfamily.

The catalysed reaction is (2R)-2-phosphoglycerate = (2R)-3-phosphoglycerate. Its pathway is carbohydrate degradation; glycolysis; pyruvate from D-glyceraldehyde 3-phosphate: step 3/5. In terms of biological role, catalyzes the interconversion of 2-phosphoglycerate and 3-phosphoglycerate. The protein is 2,3-bisphosphoglycerate-dependent phosphoglycerate mutase of Staphylococcus epidermidis (strain ATCC 35984 / DSM 28319 / BCRC 17069 / CCUG 31568 / BM 3577 / RP62A).